The sequence spans 130 residues: MARNRSSRTKKRKKLNIDRGVVHIKSTFNNTIITLSDLDGNTILWASGGTVGYSGSKKSTPYAAQLAADKIAKEALKLGLTRVSIEVKGPGAGREAAIRTIQAAGLVVDSIKDITPIPHNGCRPRRRRRV.

Belongs to the universal ribosomal protein uS11 family. Part of the 30S ribosomal subunit. Interacts with proteins S7 and S18. Binds to IF-3.

Its function is as follows. Located on the platform of the 30S subunit, it bridges several disparate RNA helices of the 16S rRNA. Forms part of the Shine-Dalgarno cleft in the 70S ribosome. This is Small ribosomal subunit protein uS11 from Kosmotoga olearia (strain ATCC BAA-1733 / DSM 21960 / TBF 19.5.1).